The following is a 556-amino-acid chain: Formate--tetrahydrofolate ligase (556 aa).

An ATP-binding site is contributed by 65–72 (TPAGEGKS).

Belongs to the formate--tetrahydrofolate ligase family.

It catalyses the reaction (6S)-5,6,7,8-tetrahydrofolate + formate + ATP = (6R)-10-formyltetrahydrofolate + ADP + phosphate. It participates in one-carbon metabolism; tetrahydrofolate interconversion. The protein is Formate--tetrahydrofolate ligase of Streptococcus pneumoniae (strain Hungary19A-6).